We begin with the raw amino-acid sequence, 290 residues long: Probable 2-(5''-triphosphoribosyl)-3'-dephosphocoenzyme-A synthase (290 aa).

This sequence belongs to the CitG/MdcB family.

It carries out the reaction 3'-dephospho-CoA + ATP = 2'-(5''-triphospho-alpha-D-ribosyl)-3'-dephospho-CoA + adenine. In terms of biological role, involved in the formation of 2-(5''-phosphoribosyl)-3'-dephosphocoenzyme-A, the prosthetic group of the acyl-carrier protein of the malonate decarboxylase. This Stutzerimonas stutzeri (strain A1501) (Pseudomonas stutzeri) protein is Probable 2-(5''-triphosphoribosyl)-3'-dephosphocoenzyme-A synthase.